A 171-amino-acid polypeptide reads, in one-letter code: ATP synthase subunit delta (171 aa).

It belongs to the ATPase delta chain family. As to quaternary structure, F-type ATPases have 2 components, F(1) - the catalytic core - and F(0) - the membrane proton channel. F(1) has five subunits: alpha(3), beta(3), gamma(1), delta(1), epsilon(1). F(0) has three main subunits: a(1), b(2) and c(10-14). The alpha and beta chains form an alternating ring which encloses part of the gamma chain. F(1) is attached to F(0) by a central stalk formed by the gamma and epsilon chains, while a peripheral stalk is formed by the delta and b chains.

It localises to the cell membrane. Functionally, f(1)F(0) ATP synthase produces ATP from ADP in the presence of a proton or sodium gradient. F-type ATPases consist of two structural domains, F(1) containing the extramembraneous catalytic core and F(0) containing the membrane proton channel, linked together by a central stalk and a peripheral stalk. During catalysis, ATP synthesis in the catalytic domain of F(1) is coupled via a rotary mechanism of the central stalk subunits to proton translocation. This protein is part of the stalk that links CF(0) to CF(1). It either transmits conformational changes from CF(0) to CF(1) or is implicated in proton conduction. The sequence is that of ATP synthase subunit delta from Acholeplasma laidlawii (strain PG-8A).